A 336-amino-acid chain; its full sequence is Holliday junction branch migration complex subunit RuvB (336 aa).

A large ATPase domain (RuvB-L) region spans residues 1 to 182; it reads MKERIVNLET…FGMSFRMQFY (182 aa). ATP is bound by residues leucine 21, arginine 22, glycine 63, lysine 66, threonine 67, serine 68, 129-131, arginine 172, tyrosine 182, and arginine 219; that span reads EDF. Residue threonine 67 coordinates Mg(2+). A small ATPAse domain (RuvB-S) region spans residues 183-253; that stretch reads SPSELALIIK…ITLHALNELG (71 aa). Residues 256–336 form a head domain (RuvB-H) region; the sequence is ELGFDEADLA…IPTLKSQTLF (81 aa). Arginine 310 and arginine 315 together coordinate DNA.

This sequence belongs to the RuvB family. As to quaternary structure, homohexamer. Forms an RuvA(8)-RuvB(12)-Holliday junction (HJ) complex. HJ DNA is sandwiched between 2 RuvA tetramers; dsDNA enters through RuvA and exits via RuvB. An RuvB hexamer assembles on each DNA strand where it exits the tetramer. Each RuvB hexamer is contacted by two RuvA subunits (via domain III) on 2 adjacent RuvB subunits; this complex drives branch migration. In the full resolvosome a probable DNA-RuvA(4)-RuvB(12)-RuvC(2) complex forms which resolves the HJ.

It is found in the cytoplasm. The catalysed reaction is ATP + H2O = ADP + phosphate + H(+). The RuvA-RuvB-RuvC complex processes Holliday junction (HJ) DNA during genetic recombination and DNA repair, while the RuvA-RuvB complex plays an important role in the rescue of blocked DNA replication forks via replication fork reversal (RFR). RuvA specifically binds to HJ cruciform DNA, conferring on it an open structure. The RuvB hexamer acts as an ATP-dependent pump, pulling dsDNA into and through the RuvAB complex. RuvB forms 2 homohexamers on either side of HJ DNA bound by 1 or 2 RuvA tetramers; 4 subunits per hexamer contact DNA at a time. Coordinated motions by a converter formed by DNA-disengaged RuvB subunits stimulates ATP hydrolysis and nucleotide exchange. Immobilization of the converter enables RuvB to convert the ATP-contained energy into a lever motion, pulling 2 nucleotides of DNA out of the RuvA tetramer per ATP hydrolyzed, thus driving DNA branch migration. The RuvB motors rotate together with the DNA substrate, which together with the progressing nucleotide cycle form the mechanistic basis for DNA recombination by continuous HJ branch migration. Branch migration allows RuvC to scan DNA until it finds its consensus sequence, where it cleaves and resolves cruciform DNA. The protein is Holliday junction branch migration complex subunit RuvB of Helicobacter pylori (strain HPAG1).